Consider the following 400-residue polypeptide: Laminin subunit B (400 aa).

Laminin EGF-like domains lie at 1–5 (EGCKP), 6–53 (CECD…GCKS), and 54–100 (CTCN…QCIP). Intrachain disulfides connect C6/C18, C8/C25, C27/C36, C39/C51, C54/C66, C56/C73, C75/C84, and C87/C98. The segment at 101-400 (CGECFDNWDK…AEAKNNAHEA (300 aa)) is domain II and I. A coiled-coil region spans residues 140 to 235 (KEFEELEQVL…RENALEIQEQ (96 aa)). N160, N175, N216, N266, N283, N310, and N356 each carry an N-linked (GlcNAc...) asparagine glycan. The stretch at 353 to 400 (EAKNTSRKAEELIKSKYRSTSSTLSELENSNKQCKQATAEAKNNAHEA) forms a coiled coil. The interval 369 to 400 (YRSTSSTLSELENSNKQCKQATAEAKNNAHEA) is disordered. The span at 371 to 383 (STSSTLSELENSN) shows a compositional bias: low complexity.

As to quaternary structure, laminin is a complex glycoprotein, consisting of three different polypeptide chains (alpha, beta, gamma), which are bound to each other by disulfide bonds into a cross-shaped molecule comprising one long and three short arms with globules at each end. As to expression, individual glial and muscle cells.

It localises to the secreted. The protein localises to the extracellular space. It is found in the extracellular matrix. Its function is as follows. Binding to cells via a high affinity receptor, laminin is thought to mediate the attachment, migration and organization of cells into tissues during embryonic development by interacting with other extracellular matrix components. In Hirudo medicinalis (Medicinal leech), this protein is Laminin subunit B.